Here is a 295-residue protein sequence, read N- to C-terminus: Bifunctional protein FolD (295 aa).

NADP(+)-binding positions include 169–171 (GRS), Ser-194, and Ile-235.

Belongs to the tetrahydrofolate dehydrogenase/cyclohydrolase family. In terms of assembly, homodimer.

The catalysed reaction is (6R)-5,10-methylene-5,6,7,8-tetrahydrofolate + NADP(+) = (6R)-5,10-methenyltetrahydrofolate + NADPH. It catalyses the reaction (6R)-5,10-methenyltetrahydrofolate + H2O = (6R)-10-formyltetrahydrofolate + H(+). The protein operates within one-carbon metabolism; tetrahydrofolate interconversion. Its function is as follows. Catalyzes the oxidation of 5,10-methylenetetrahydrofolate to 5,10-methenyltetrahydrofolate and then the hydrolysis of 5,10-methenyltetrahydrofolate to 10-formyltetrahydrofolate. The chain is Bifunctional protein FolD from Acaryochloris marina (strain MBIC 11017).